The sequence spans 843 residues: Protein P (843 aa).

The tract at residues 1–177 (MPLSYPHFRK…FCGSPYSWEQ (177 aa)) is terminal protein domain (TP). A spacer region spans residues 178 to 346 (ELQHGSTSIN…YCLSHIINLL (169 aa)). Disordered regions lie at residues 202 to 221 (SGILSRPSAGSSIQGKFQQS) and 285 to 310 (TNPSLSTSKRHSSTGHAVELHSVPPG). Residues 347 to 690 (EDWGPCYEHG…YMNLYPVARQ (344 aa)) form a polymerase/reverse transcriptase domain (RT) region. Positions 357-600 (QHHIRTPRTP…YTLNFMGYVI (244 aa)) constitute a Reverse transcriptase domain. Mg(2+) is bound by residues D429, D551, and D552.

It belongs to the hepadnaviridae P protein family.

It catalyses the reaction DNA(n) + a 2'-deoxyribonucleoside 5'-triphosphate = DNA(n+1) + diphosphate. The catalysed reaction is Endonucleolytic cleavage to 5'-phosphomonoester.. Activated by host HSP70 and HSP40 in vitro to be able to bind the epsilon loop of the pgRNA. Because deletion of the RNase H region renders the protein partly chaperone-independent, the chaperones may be needed indirectly to relieve occlusion of the RNA-binding site by this domain. Inhibited by several reverse-transcriptase inhibitors: Lamivudine, Adefovir and Entecavir. Functionally, multifunctional enzyme that converts the viral RNA genome into dsDNA in viral cytoplasmic capsids. This enzyme displays a DNA polymerase activity that can copy either DNA or RNA templates, and a ribonuclease H (RNase H) activity that cleaves the RNA strand of RNA-DNA heteroduplexes in a partially processive 3'- to 5'-endonucleasic mode. Neo-synthesized pregenomic RNA (pgRNA) are encapsidated together with the P protein, and reverse-transcribed inside the nucleocapsid. Initiation of reverse-transcription occurs first by binding the epsilon loop on the pgRNA genome, and is initiated by protein priming, thereby the 5'-end of (-)DNA is covalently linked to P protein. Partial (+)DNA is synthesized from the (-)DNA template and generates the relaxed circular DNA (RC-DNA) genome. After budding and infection, the RC-DNA migrates in the nucleus, and is converted into a plasmid-like covalently closed circular DNA (cccDNA). The activity of P protein does not seem to be necessary for cccDNA generation, and is presumably released from (+)DNA by host nuclear DNA repair machinery. This Hepatitis B virus genotype F1 (isolate Argentina/sa11/2000) (HBV-F) protein is Protein P.